Reading from the N-terminus, the 548-residue chain is Membrane protein insertase YidC (548 aa).

Residues 6–26 traverse the membrane as a helical segment; that stretch reads NLLVIALLFVSFMIWQAWEQD. A disordered region spans residues 28–56; the sequence is NPQPQTQQTTQTTTTAAGSAADQGVPASG. The span at 29–42 shows a compositional bias: low complexity; that stretch reads PQPQTQQTTQTTTT. 4 consecutive transmembrane segments (helical) span residues 350–370, 424–444, 458–478, and 499–519; these read FVGN…GIMY, FPLI…MGSI, LSAQ…MFFI, and PVIF…YYIV.

The protein belongs to the OXA1/ALB3/YidC family. Type 1 subfamily. Interacts with the Sec translocase complex via SecD. Specifically interacts with transmembrane segments of nascent integral membrane proteins during membrane integration.

It localises to the cell inner membrane. Required for the insertion and/or proper folding and/or complex formation of integral membrane proteins into the membrane. Involved in integration of membrane proteins that insert both dependently and independently of the Sec translocase complex, as well as at least some lipoproteins. Aids folding of multispanning membrane proteins. This Salmonella choleraesuis (strain SC-B67) protein is Membrane protein insertase YidC.